The primary structure comprises 240 residues: Cysteine-rich secretory protein (240 aa).

Positions 1–19 (MIAFIVLPILAAVLQQSSG) are cleaved as a signal peptide. One can recognise an SCP domain in the interval 38–166 (VDLHNSLRRS…EYSYFYVCQY (129 aa)). 8 cysteine pairs are disulfide-bonded: C75–C153, C92–C167, C148–C164, C186–C193, C189–C198, C202–C235, C211–C229, and C220–C233. Residues 202–235 (CTKEDKYSNCKSLVQQAGCQDKQMQSDCSAICFC) form the ShKT domain.

This sequence belongs to the CRISP family. As to expression, expressed by the venom gland.

It is found in the secreted. Weakly blocks contraction of smooth muscle elicited by high potassium-induced depolarization, but does not block caffeine-stimulated contraction. May target voltage-gated calcium channels on smooth muscle. The polypeptide is Cysteine-rich secretory protein (Crotalus adamanteus (Eastern diamondback rattlesnake)).